Here is a 386-residue protein sequence, read N- to C-terminus: Prostacyclin receptor (386 aa).

Residues 1-16 lie on the Extracellular side of the membrane; sequence MADSCRNLTYVRGSVG. 2 disulfide bridges follow: Cys-5-Cys-165 and Cys-92-Cys-170. N-linked (GlcNAc...) asparagine glycosylation is present at Asn-7. Residues 17–38 traverse the membrane as a helical segment; the sequence is PATSTLMFVAGVVGNGLALGIL. Residues 39-51 are Cytoplasmic-facing; that stretch reads SARRPARPSAFAV. The helical transmembrane segment at 52-76 threads the bilayer; the sequence is LVTGLAATDLLGTSFLSPAVFVAYA. The Extracellular segment spans residues 77–94; it reads RNSSLLGLARGGPALCDA. The chain crosses the membrane as a helical span at residues 95-115; sequence FAFAMTFFGLASMLILFAMAV. Residues 116–134 lie on the Cytoplasmic side of the membrane; that stretch reads ERCLALSHPYLYAQLDGPR. A helical transmembrane segment spans residues 135 to 158; it reads CARLALPAIYAFCVLFCALPLLGL. The Extracellular portion of the chain corresponds to 159–181; the sequence is GQHQQYCPGSWCFLRMRWAQPGG. Residues 182-208 form a helical membrane-spanning segment; that stretch reads AAFSLAYAGLVALLVAAIFLCNGSVTL. The Cytoplasmic segment spans residues 209 to 235; that stretch reads SLCRMYRQQKRHQGSLGPRPRTGEDEV. A helical transmembrane segment spans residues 236 to 260; that stretch reads DHLILLALMTVVMAVCSLPLTIRCF. Residues 261–274 are Extracellular-facing; sequence TQAVAPDSSSEMGD. Residues 275 to 295 form a helical membrane-spanning segment; sequence LLAFRFYAFNPILDPWVFILF. At 296–386 the chain is on the cytoplasmic side; sequence RKAVFQRLKL…AEASVACSLC (91 aa). A disordered region spans residues 322–376; sequence PLSQLASGRRDPRAPSAPVGKEGSCVPLSAWGEGQVEPLPPTQQSSGSAVGTSSK. Polar residues predominate over residues 363-376; it reads TQQSSGSAVGTSSK. Residue Cys-383 is modified to Cysteine methyl ester. Cys-383 carries the S-farnesyl cysteine lipid modification. Residues 384-386 constitute a propeptide, removed in mature form; that stretch reads SLC.

This sequence belongs to the G-protein coupled receptor 1 family. As to quaternary structure, interacts (non-isoprenylated C-terminus) with PDZK1. Isoprenylation does not influence ligand binding but is required for efficient coupling to the effectors adenylyl cyclase and phospholipase C.

The protein localises to the cell membrane. Receptor for prostacyclin (prostaglandin I2 or PGI2). The activity of this receptor is mediated by G(s) proteins which activate adenylate cyclase. The protein is Prostacyclin receptor (PTGIR) of Homo sapiens (Human).